The chain runs to 554 residues: Germacrene A synthase (554 aa).

Asp-306, Asp-310, Thr-453, and Glu-457 together coordinate Mg(2+). The short motif at 306–310 (DDTYD) is the DDXXD motif element.

It belongs to the terpene synthase family. It depends on Mg(2+) as a cofactor.

It localises to the cytoplasm. The protein localises to the cytosol. The enzyme catalyses (2E,6E)-farnesyl diphosphate = (+)-(R)-germacrene A + diphosphate. It functions in the pathway secondary metabolite biosynthesis; terpenoid biosynthesis. Its function is as follows. Sesquiterpene synthase involved in germacrene A biosynthesis. Also produces additional sesquiterpene products, including 4,5-di-epi-aristolochene, eremophilene, alpha-selinene. In Pogostemon cablin (Patchouli), this protein is Germacrene A synthase.